The following is a 1441-amino-acid chain: MGARASVLSGGELDRWENIRLRPGGKKKYKLKHVVWASRELERFAVNPGLLETSEGCRQILGQLQPSLQTGSEELKSLYNTVATLYCVHQKIEIKDTKEALEKIEEEQNKSKKKAQQAAADTGNRGNSSQVSQNYPIVQNIEGQMVHQAISPRTLNAWVKVVEEKAFSPEVIPMFSALSEGATPQDLNTMLNTVGGHQAAMQMLKETINEEAAEWDRLHPVHAGPITPGQMREPRGSDIAGTTSTLQEQIGWMTNNPPIPVGEIYKRWIILGLNKIVRMYSPSSILDIRQGPKEPFRDYVDRFYKTLRAEQASQEVKNRTTETLLVQNANPDCKTILKALGPAATLEEMMTACQGVGGPGHKARVLAEAMSQVTNSATIMMQRGNFRNQRKIIKCFNCGKEGHIAKNCRAPRKRGCWKCGKEGHQMKDCTERQANFLREDLAFLQGKAEFSSEQNRANSPTRRELQVWGRDNNSLSEAGEEAGDDRQGPVSFSFPQITLWQRPIVTIKIGGQLKEALLDTGADDTVLGEMNLPRRWKPKMIGGIGGFIKVRQYDQITIGICGHKAIGTVLVGPTPVNIIGRNLLTQLGCTLNFPISPIETVPVKLKPGMDGPKVKQWPLTEEKIKALIEICTEMEKEGKISKIGPENPYNTPVFAIKKKDSTKWRKLVDFRELNKKTQDFWEVQLGIPHPAGLKKKKSVTVLDVGDAYFSVPLDKDFRKYTAFTIPSINNETPGIRYQYNVLPQGWKGSPAIFQSSMTKILEPFRKQNPDIVIYQYMDDLYVGSDLEIGQHRAKIEELRRHLLRWGFTTPDKKHQKEPPFLWMGYELHPDKWTVQPIVLPEKDSWTVNDIQKLVGKLNWASQIYAGIKVKQLCKLLRGTKALTEVIPLTEEAELELAENREILKEPVHGVYYDPSKDLIAEVQKQGQGQWTYQIYQEPFKNLKTGKYARMRGAHTNDVKQLTEAVQKIATESIVIWGKTPKFRLPIQKETWETWWTEYTXATWIPEWEVVNTPPLVKLWYQLEKEPIVGAETFYVDGAANRETKKGKAGYVTNRGRQKVVSLTDTTNQKTELQAIHLALQDSGLEVNIVTDSQYALGIIQAQPDKSESELVSQIIEQLIKKEKVYLAWVPAHKGIGGNEQVDKLVSAGIRKVLFLDGIDKAQEDHEKYHSNWRAMASDFNLPPIVAKEIVASCDKCQLKGEAMHGQVDCSPGIWQLDCTHLEGKVILVAVHVASGYIEAEVIPAETGQETAYFLLKLAGRWPVKTIHTDNGPNFTSTTVKAACWWTGIKQEFGIPYNPQSQGVIESMNKELKKIIGQVRDQAEHLKRAVQMAVFIHNFKRKGGIGGYSAGERIVGIIATDIQTKELQKQITKIQNFRVYYRDSRDPLWKGPAKLLWKGEGAVVIQDNNDIKVVPRRKAKVIRDYGKQTAGDDCVASRQDED.

Gly-2 carries the N-myristoyl glycine; by host lipid modification. Residues 7 to 31 (VLSGGELDRWENIRLRPGGKKKYKL) are interaction with Gp41. Residues 8–43 (LSGGELDRWENIRLRPGGKKKYKLKHVVWASRELER) form an interaction with host CALM1 region. The interaction with host AP3D1 stretch occupies residues 12–19 (ELDRWENI). The interaction with membrane phosphatidylinositol 4,5-bisphosphate and RNA stretch occupies residues 14–33 (DRWENIRLRPGGKKKYKLKH). The short motif at 16–22 (WENIRLR) is the Nuclear export signal element. The Nuclear localization signal motif lies at 26–32 (KKKYKLK). The segment at 73–77 (EELKS) is interaction with membrane phosphatidylinositol 4,5-bisphosphate. The tract at residues 106 to 131 (EEQNKSKKKAQQAAADTGNRGNSSQV) is disordered. Residue Tyr-135 is modified to Phosphotyrosine; by host. The segment at 192-230 (NTVGGHQAAMQMLKETINEEAAEWDRLHPVHAGPITPGQ) is interaction with human PPIA/CYPA and NUP153. The interval 280-366 (YSPSSILDIR…GGPGHKARVL (87 aa)) is dimerization/Multimerization of capsid protein p24. 2 consecutive CCHC-type zinc fingers follow at residues 393–410 (IKCF…NCRA) and 414–431 (RGCW…DCTE). Polar residues predominate over residues 451 to 460 (SSEQNRANSP). The disordered stretch occupies residues 451-489 (SSEQNRANSPTRRELQVWGRDNNSLSEAGEEAGDDRQGP). The dimerization of protease stretch occupies residues 495 to 499 (PQITL). Residues 514–583 (KEALLDTGAD…TPVNIIGRNL (70 aa)) enclose the Peptidase A2 domain. Asp-519 (for protease activity; shared with dimeric partner) is an active-site residue. Dimerization of protease stretches follow at residues 543–549 (GIGGFIK) and 582–594 (NLLT…LNFP). Positions 637-827 (EGKISKIGPE…PPFLWMGYEL (191 aa)) constitute a Reverse transcriptase domain. Asp-703, Asp-778, and Asp-779 together coordinate Mg(2+). The tract at residues 820–828 (FLWMGYELH) is RT 'primer grip'. Residues 991 to 1007 (WETWWTEYTXATWIPEW) carry the Tryptophan repeat motif motif. In terms of domain architecture, RNase H type-1 spans 1027–1150 (IVGAETFYVD…VDKLVSAGIR (124 aa)). 4 residues coordinate Mg(2+): Asp-1036, Glu-1071, Asp-1091, and Asp-1142. An Integrase-type zinc finger spans residues 1156–1197 (DGIDKAQEDHEKYHSNWRAMASDFNLPPIVAKEIVASCDKCQ). Residues His-1165, His-1169, Cys-1193, and Cys-1196 each contribute to the Zn(2+) site. Positions 1207 to 1357 (VDCSPGIWQL…SAGERIVGII (151 aa)) constitute an Integrase catalytic domain. Asp-1217, Asp-1269, and Glu-1305 together coordinate Mg(2+). The integrase-type DNA-binding region spans 1376-1423 (FRVYYRDSRDPLWKGPAKLLWKGEGAVVIQDNNDIKVVPRRKAKVIRD).

In terms of assembly, homotrimer; further assembles as hexamers of trimers. Interacts with gp41 (via C-terminus). Interacts with host CALM1; this interaction induces a conformational change in the Matrix protein, triggering exposure of the myristate group. Interacts with host AP3D1; this interaction allows the polyprotein trafficking to multivesicular bodies during virus assembly. Part of the pre-integration complex (PIC) which is composed of viral genome, matrix protein, Vpr and integrase. As to quaternary structure, homodimer; the homodimer further multimerizes as homohexamers or homopentamers. Interacts with human PPIA/CYPA; This interaction stabilizes the capsid. Interacts with human NUP153. Interacts with host PDZD8; this interaction stabilizes the capsid. Interacts with monkey TRIM5; this interaction destabilizes the capsid. Homodimer, whose active site consists of two apposed aspartic acid residues. In terms of assembly, heterodimer of p66 RT and p51 RT (RT p66/p51). Heterodimerization of RT is essential for DNA polymerase activity. The overall folding of the subdomains is similar in p66 RT and p51 RT but the spatial arrangements of the subdomains are dramatically different. As to quaternary structure, homotetramer; may further associate as a homohexadecamer. Part of the pre-integration complex (PIC) which is composed of viral genome, matrix protein, Vpr and integrase. Interacts with human SMARCB1/INI1 and human PSIP1/LEDGF isoform 1. Interacts with human KPNA3; this interaction might play a role in nuclear import of the pre-integration complex. Interacts with human NUP153; this interaction might play a role in nuclear import of the pre-integration complex. Requires Mg(2+) as cofactor. Post-translationally, specific enzymatic cleavages by the viral protease yield mature proteins. The protease is released by autocatalytic cleavage. The polyprotein is cleaved during and after budding, this process is termed maturation. Proteolytic cleavage of p66 RT removes the RNase H domain to yield the p51 RT subunit. Nucleocapsid protein p7 might be further cleaved after virus entry. In terms of processing, tyrosine phosphorylated presumably in the virion by a host kinase. Phosphorylation is apparently not a major regulator of membrane association. Phosphorylated possibly by host MAPK1; this phosphorylation is necessary for Pin1-mediated virion uncoating. Post-translationally, methylated by host PRMT6, impairing its function by reducing RNA annealing and the initiation of reverse transcription.

The protein localises to the host cell membrane. The protein resides in the host endosome. It localises to the host multivesicular body. It is found in the virion membrane. Its subcellular location is the host nucleus. The protein localises to the host cytoplasm. The protein resides in the virion. It catalyses the reaction Specific for a P1 residue that is hydrophobic, and P1' variable, but often Pro.. It carries out the reaction Endohydrolysis of RNA in RNA/DNA hybrids. Three different cleavage modes: 1. sequence-specific internal cleavage of RNA. Human immunodeficiency virus type 1 and Moloney murine leukemia virus enzymes prefer to cleave the RNA strand one nucleotide away from the RNA-DNA junction. 2. RNA 5'-end directed cleavage 13-19 nucleotides from the RNA end. 3. DNA 3'-end directed cleavage 15-20 nucleotides away from the primer terminus.. The enzyme catalyses 3'-end directed exonucleolytic cleavage of viral RNA-DNA hybrid.. The catalysed reaction is DNA(n) + a 2'-deoxyribonucleoside 5'-triphosphate = DNA(n+1) + diphosphate. With respect to regulation, protease: The viral protease is inhibited by many synthetic protease inhibitors (PIs), such as amprenavir, atazanavir, indinavir, loprinavir, nelfinavir, ritonavir and saquinavir. Use of protease inhibitors in tritherapy regimens permit more ambitious therapeutic strategies. Reverse transcriptase/ribonuclease H: RT can be inhibited either by nucleoside RT inhibitors (NRTIs) or by non nucleoside RT inhibitors (NNRTIs). NRTIs act as chain terminators, whereas NNRTIs inhibit DNA polymerization by binding a small hydrophobic pocket near the RT active site and inducing an allosteric change in this region. Classical NRTIs are abacavir, adefovir (PMEA), didanosine (ddI), lamivudine (3TC), stavudine (d4T), tenofovir (PMPA), zalcitabine (ddC), and zidovudine (AZT). Classical NNRTIs are atevirdine (BHAP U-87201E), delavirdine, efavirenz (DMP-266), emivirine (I-EBU), and nevirapine (BI-RG-587). The tritherapies used as a basic effective treatment of AIDS associate two NRTIs and one NNRTI. In terms of biological role, mediates, with Gag polyprotein, the essential events in virion assembly, including binding the plasma membrane, making the protein-protein interactions necessary to create spherical particles, recruiting the viral Env proteins, and packaging the genomic RNA via direct interactions with the RNA packaging sequence (Psi). Gag-Pol polyprotein may regulate its own translation, by the binding genomic RNA in the 5'-UTR. At low concentration, the polyprotein would promote translation, whereas at high concentration, the polyprotein would encapsidate genomic RNA and then shut off translation. Its function is as follows. Targets the polyprotein to the plasma membrane via a multipartite membrane-binding signal, that includes its myristoylated N-terminus. Matrix protein is part of the pre-integration complex. Implicated in the release from host cell mediated by Vpu. Binds to RNA. Forms the conical core that encapsulates the genomic RNA-nucleocapsid complex in the virion. Most core are conical, with only 7% tubular. The core is constituted by capsid protein hexamer subunits. The core is disassembled soon after virion entry. Host restriction factors such as TRIM5-alpha or TRIMCyp bind retroviral capsids and cause premature capsid disassembly, leading to blocks in reverse transcription. Capsid restriction by TRIM5 is one of the factors which restricts HIV-1 to the human species. Host PIN1 apparently facilitates the virion uncoating. On the other hand, interactions with PDZD8 or CYPA stabilize the capsid. Functionally, encapsulates and protects viral dimeric unspliced genomic RNA (gRNA). Binds these RNAs through its zinc fingers. Acts as a nucleic acid chaperone which is involved in rearangement of nucleic acid secondary structure during gRNA retrotranscription. Also facilitates template switch leading to recombination. As part of the polyprotein, participates in gRNA dimerization, packaging, tRNA incorporation and virion assembly. In terms of biological role, aspartyl protease that mediates proteolytic cleavages of Gag and Gag-Pol polyproteins during or shortly after the release of the virion from the plasma membrane. Cleavages take place as an ordered, step-wise cascade to yield mature proteins. This process is called maturation. Displays maximal activity during the budding process just prior to particle release from the cell. Also cleaves Nef and Vif, probably concomitantly with viral structural proteins on maturation of virus particles. Hydrolyzes host EIF4GI and PABP1 in order to shut off the capped cellular mRNA translation. The resulting inhibition of cellular protein synthesis serves to ensure maximal viral gene expression and to evade host immune response. Also mediates cleavage of host YTHDF3. Mediates cleavage of host CARD8, thereby activating the CARD8 inflammasome, leading to the clearance of latent HIV-1 in patient CD4(+) T-cells after viral reactivation; in contrast, HIV-1 can evade CARD8-sensing when its protease remains inactive in infected cells prior to viral budding. Its function is as follows. Multifunctional enzyme that converts the viral RNA genome into dsDNA in the cytoplasm, shortly after virus entry into the cell. This enzyme displays a DNA polymerase activity that can copy either DNA or RNA templates, and a ribonuclease H (RNase H) activity that cleaves the RNA strand of RNA-DNA heteroduplexes in a partially processive 3' to 5' endonucleasic mode. Conversion of viral genomic RNA into dsDNA requires many steps. A tRNA(3)-Lys binds to the primer-binding site (PBS) situated at the 5'-end of the viral RNA. RT uses the 3' end of the tRNA primer to perform a short round of RNA-dependent minus-strand DNA synthesis. The reading proceeds through the U5 region and ends after the repeated (R) region which is present at both ends of viral RNA. The portion of the RNA-DNA heteroduplex is digested by the RNase H, resulting in a ssDNA product attached to the tRNA primer. This ssDNA/tRNA hybridizes with the identical R region situated at the 3' end of viral RNA. This template exchange, known as minus-strand DNA strong stop transfer, can be either intra- or intermolecular. RT uses the 3' end of this newly synthesized short ssDNA to perform the RNA-dependent minus-strand DNA synthesis of the whole template. RNase H digests the RNA template except for two polypurine tracts (PPTs) situated at the 5'-end and near the center of the genome. It is not clear if both polymerase and RNase H activities are simultaneous. RNase H probably can proceed both in a polymerase-dependent (RNA cut into small fragments by the same RT performing DNA synthesis) and a polymerase-independent mode (cleavage of remaining RNA fragments by free RTs). Secondly, RT performs DNA-directed plus-strand DNA synthesis using the PPTs that have not been removed by RNase H as primers. PPTs and tRNA primers are then removed by RNase H. The 3' and 5' ssDNA PBS regions hybridize to form a circular dsDNA intermediate. Strand displacement synthesis by RT to the PBS and PPT ends produces a blunt ended, linear dsDNA copy of the viral genome that includes long terminal repeats (LTRs) at both ends. Catalyzes viral DNA integration into the host chromosome, by performing a series of DNA cutting and joining reactions. This enzyme activity takes place after virion entry into a cell and reverse transcription of the RNA genome in dsDNA. The first step in the integration process is 3' processing. This step requires a complex comprising the viral genome, matrix protein, Vpr and integrase. This complex is called the pre-integration complex (PIC). The integrase protein removes 2 nucleotides from each 3' end of the viral DNA, leaving recessed CA OH's at the 3' ends. In the second step, the PIC enters cell nucleus. This process is mediated through integrase and Vpr proteins, and allows the virus to infect a non dividing cell. This ability to enter the nucleus is specific of lentiviruses, other retroviruses cannot and rely on cell division to access cell chromosomes. In the third step, termed strand transfer, the integrase protein joins the previously processed 3' ends to the 5' ends of strands of target cellular DNA at the site of integration. The 5'-ends are produced by integrase-catalyzed staggered cuts, 5 bp apart. A Y-shaped, gapped, recombination intermediate results, with the 5'-ends of the viral DNA strands and the 3' ends of target DNA strands remaining unjoined, flanking a gap of 5 bp. The last step is viral DNA integration into host chromosome. This involves host DNA repair synthesis in which the 5 bp gaps between the unjoined strands are filled in and then ligated. Since this process occurs at both cuts flanking the HIV genome, a 5 bp duplication of host DNA is produced at the ends of HIV-1 integration. Alternatively, Integrase may catalyze the excision of viral DNA just after strand transfer, this is termed disintegration. The polypeptide is Gag-Pol polyprotein (gag-pol) (Human immunodeficiency virus type 1 group M subtype B (isolate MN) (HIV-1)).